The following is a 334-amino-acid chain: BTB and MATH domain-containing protein 39 (334 aa).

The MATH domain occupies 14–141 (IVTLVFNIYN…EGRFQIEFDL (128 aa)). In terms of domain architecture, BTB spans 164–229 (ADGELITDGK…LQLDSFEVSV (66 aa)).

The polypeptide is BTB and MATH domain-containing protein 39 (bath-39) (Caenorhabditis elegans).